Here is a 179-residue protein sequence, read N- to C-terminus: Signal peptidase complex subunit 2 (179 aa).

Topologically, residues 1-48 (MSGNNVQEEDSTFHVSNLYSETEIKKITQDFISEKIREQNFEEIVKYS) are cytoplasmic. Residues 49-69 (NIRIFLSLVLIVIGTYCSIFV) form a helical membrane-spanning segment. The Extracellular portion of the chain corresponds to 70–74 (QYKKN). The helical transmembrane segment at 75–95 (PVIMIQLLVAFFVVSTTLIIF) threads the bilayer. The Cytoplasmic segment spans residues 96–179 (EYFFFDDVFM…AHGRTLKLKN (84 aa)).

It belongs to the SPCS2 family. In terms of assembly, component of the signal peptidase complex (SPC) composed of a catalytic subunit SEC11/SPC21 and three accessory subunits SPC25, SPC3/SPC22, SPC1/SPC12. The complex induces a local thinning of the ER membrane which is used to measure the length of the signal peptide (SP) h-region of protein substrates. This ensures the selectivity of the complex towards h-regions shorter than 18-20 amino acids. Within the complex, interacts with SEC11/SPC21. Component of a complex composed of SPC25 and PMV; the interaction is mediated via the transmembrane domains. The complex interacts with the SEC61 channel-forming translocon complex and is involved in the recognition and import of PEXEL motif-containing proteins into the ER for subsequent export.

Its subcellular location is the endoplasmic reticulum membrane. In terms of biological role, component of the signal peptidase complex (SPC) which catalyzes the cleavage of N-terminal signal sequences from nascent proteins as they are translocated into the lumen of the endoplasmic reticulum. Enhances the enzymatic activity of SPC and facilitates the interactions between different components of the translocation site. Also, regulatory component of the CSP25-plasmepsin PMV complex which cleaves the pentameric localization motif RxLxE/Q/D (termed Plasmodium export element (PEXEL)) located downstream of the N-terminal secretory signal sequence of several proteins. The chain is Signal peptidase complex subunit 2 from Plasmodium falciparum (isolate 3D7).